Here is a 339-residue protein sequence, read N- to C-terminus: Dicamba O-demethylase, oxygenase component (339 aa).

Residues 8–110 (WYVAALPEEL…VVERDALIWI (103 aa)) enclose the Rieske domain. The [2Fe-2S] cluster site is built by C48, H50, C67, and H70. Positions 159 and 164 each coordinate Fe cation. 3 residues coordinate 3,6-dichloro-2-methoxybenzoate: N229, H250, and W284. D293 provides a ligand contact to Fe cation.

As to quaternary structure, homotrimer. The dicamba O-demethylase multicomponent enzyme system is composed of an oxygenase component (DdmC) and an electron transfer component formed by a ferredoxin reductase (DdmA) and a ferredoxin (DdmB). In vitro, dicamba O-demethylase assays in which DdmA2 is substituted for DdmA1 demonstrate that the two enzymes possess nearly identical activities. Requires [2Fe-2S] cluster as cofactor.

It catalyses the reaction 3,6-dichloro-2-methoxybenzoate + 2 reduced [2Fe-2S]-[ferredoxin] + O2 + 2 H(+) = 3,6-dichlorosalicylate + formaldehyde + 2 oxidized [2Fe-2S]-[ferredoxin] + H2O. Its activity is regulated as follows. Activity enhanced by Fe(2+) and Mg(2+) ions. Functionally, component of the dicamba O-demethylase multicomponent enzyme system involved in the degradation of the herbicide dicamba. In vitro, catalyzes the O-demethylation of 2-methoxy-3,6-dichlorobenzoic acid (dicamba) to yield 3,6-dichlorosalicylic acid (DCSA) via an exocyclic monooxygenation. This chain is Dicamba O-demethylase, oxygenase component, found in Stenotrophomonas maltophilia (Pseudomonas maltophilia).